Reading from the N-terminus, the 132-residue chain is Small ribosomal subunit protein uS8 (132 aa).

The protein belongs to the universal ribosomal protein uS8 family. Part of the 30S ribosomal subunit. Contacts proteins S5 and S12.

In terms of biological role, one of the primary rRNA binding proteins, it binds directly to 16S rRNA central domain where it helps coordinate assembly of the platform of the 30S subunit. This Sinorhizobium medicae (strain WSM419) (Ensifer medicae) protein is Small ribosomal subunit protein uS8.